Consider the following 282-residue polypeptide: MASSATAPNSLSFFSSSLFLSSSHQIPKTYISVSKLGSGRVSKPLSVSSQLATLPILSFEGEKVGETYLDLKAAPEDTARAVVHRAIVTDLNNKRRGTASTLTRGEVRGGGIKPYSQKKTGHARRGSQRTPLRPGGGVVFGPRPKDWSIKINRKEKKLAISTALSSAASAEGGAIVVEEFGEKFEKPKTKDFLAAMQRWGLDPKEKAMFLMIDVDENVAKSSRNIGTLRMLTPRTLNLFDILNADKLVLTPAAVEFLNARYGVDAVEEEDDDEDETEGSEEA.

The transit peptide at 1 to 49 (MASSATAPNSLSFFSSSLFLSSSHQIPKTYISVSKLGSGRVSKPLSVSS) directs the protein to the chloroplast. Residues 106–138 (EVRGGGIKPYSQKKTGHARRGSQRTPLRPGGGV) form a disordered region.

The protein belongs to the universal ribosomal protein uL4 family. In terms of assembly, part of the 50S ribosomal subunit.

It is found in the plastid. Its subcellular location is the chloroplast. In terms of biological role, this protein binds directly and specifically to 23S rRNA. May play a role in plastid transcriptional regulation. This Arabidopsis thaliana (Mouse-ear cress) protein is Large ribosomal subunit protein uL4c (RPL4).